Reading from the N-terminus, the 443-residue chain is Aspartic protease PEP3 (443 aa).

A signal peptide spans 1-36; sequence MQNRPRVFDSAMNLSPNMHFLSLMPGLLLLSLQVHT. The propeptide at 37–107 is activation peptide; that stretch reads SPTPLKKTIR…NTVSKAMQAN (71 aa). The 318-residue stretch at 123 to 440 folds into the Peptidase A1 domain; sequence YLSPVTIGGQ…DLRGPSLHVA (318 aa). Asp-139 is a catalytic residue. Residues Asn-180 and Asn-293 are each glycosylated (N-linked (GlcNAc...) asparagine). The active site involves Asp-327. A disulfide bridge connects residues Cys-363 and Cys-403. N-linked (GlcNAc...) asparagine glycosylation is found at Asn-364 and Asn-388.

It belongs to the peptidase A1 family. As to quaternary structure, monomer.

The protein localises to the secreted. Functionally, secreted aspartic endopeptidase that allows assimilation of proteinaceous substrates. The scissile peptide bond is attacked by a nucleophilic water molecule activated by two aspartic residues in the active site. Shows a broad primary substrate specificity. Favors hydrophobic residues at the P1 and P1' positions. The chain is Aspartic protease PEP3 from Coccidioides posadasii (strain C735) (Valley fever fungus).